The following is a 523-amino-acid chain: Nitrogenase molybdenum-iron protein beta chain (523 aa).

4 residues coordinate [8Fe-7S] cluster: C70, C95, C153, and S188.

This sequence belongs to the NifD/NifK/NifE/NifN family. As to quaternary structure, tetramer of two alpha and two beta chains. Forms complex with the iron protein (nitrogenase component 2). [8Fe-7S] cluster serves as cofactor.

The catalysed reaction is N2 + 8 reduced [2Fe-2S]-[ferredoxin] + 16 ATP + 16 H2O = H2 + 8 oxidized [2Fe-2S]-[ferredoxin] + 2 NH4(+) + 16 ADP + 16 phosphate + 6 H(+). Its activity is regulated as follows. Nitrogenase holoenzyme is subject to 'conformational protection' by FeSII; under oxidizing conditions FeSII binds to the holoenzyme and reversibly protects it from oxidation. Its function is as follows. This molybdenum-iron protein is part of the nitrogenase complex that catalyzes the key enzymatic reactions in nitrogen fixation. This Azotobacter vinelandii protein is Nitrogenase molybdenum-iron protein beta chain (nifK).